Here is a 380-residue protein sequence, read N- to C-terminus: Putative 8-amino-7-oxononanoate synthase (380 aa).

Residue R18 participates in substrate binding. Pyridoxal 5'-phosphate is bound at residue 106–107 (GY). H131 is a substrate binding site. Pyridoxal 5'-phosphate contacts are provided by residues S179, 205 to 208 (DEAH), and 236 to 239 (TFGK). K239 carries the post-translational modification N6-(pyridoxal phosphate)lysine. T352 lines the substrate pocket.

It belongs to the class-II pyridoxal-phosphate-dependent aminotransferase family. BioF subfamily. As to quaternary structure, homodimer. The cofactor is pyridoxal 5'-phosphate.

It catalyses the reaction 6-carboxyhexanoyl-[ACP] + L-alanine + H(+) = (8S)-8-amino-7-oxononanoate + holo-[ACP] + CO2. The protein operates within cofactor biosynthesis; biotin biosynthesis. In terms of biological role, catalyzes the decarboxylative condensation of pimeloyl-[acyl-carrier protein] and L-alanine to produce 8-amino-7-oxononanoate (AON), [acyl-carrier protein], and carbon dioxide. This is Putative 8-amino-7-oxononanoate synthase (bioF) from Neisseria meningitidis serogroup C (strain 053442).